Consider the following 599-residue polypeptide: Sulfite reductase [NADPH] flavoprotein alpha-component (599 aa).

The Flavodoxin-like domain occupies 64 to 202 (ITIISASQTG…AASEWRARVV (139 aa)). FMN contacts are provided by residues 70–75 (SQTGNA), 117–120 (STQG), and 153–162 (LGDSSYEFFC). Positions 234–448 (DSPLVASLSV…IEHNDNFRLP (215 aa)) constitute an FAD-binding FR-type domain. FAD contacts are provided by residues Thr322, Ala356, 386–389 (RLYS), 404–406 (TVG), Tyr410, and 419–422 (GGAS). Residues 519-520 (SR), 525-529 (KVYVQ), and Asp561 contribute to the NADP(+) site. Residue Tyr599 participates in FAD binding.

It belongs to the NADPH-dependent sulphite reductase flavoprotein subunit CysJ family. This sequence in the N-terminal section; belongs to the flavodoxin family. In the C-terminal section; belongs to the flavoprotein pyridine nucleotide cytochrome reductase family. As to quaternary structure, alpha(8)-beta(8). The alpha component is a flavoprotein, the beta component is a hemoprotein. It depends on FAD as a cofactor. FMN serves as cofactor.

The enzyme catalyses hydrogen sulfide + 3 NADP(+) + 3 H2O = sulfite + 3 NADPH + 4 H(+). It functions in the pathway sulfur metabolism; hydrogen sulfide biosynthesis; hydrogen sulfide from sulfite (NADPH route): step 1/1. Functionally, component of the sulfite reductase complex that catalyzes the 6-electron reduction of sulfite to sulfide. This is one of several activities required for the biosynthesis of L-cysteine from sulfate. The flavoprotein component catalyzes the electron flow from NADPH -&gt; FAD -&gt; FMN to the hemoprotein component. The chain is Sulfite reductase [NADPH] flavoprotein alpha-component from Escherichia coli O9:H4 (strain HS).